The following is a 199-amino-acid chain: Cytochrome b (199 aa).

4 helical membrane-spanning segments follow: residues Leu1–Met8, Trp32–Ile53, Trp68–Leu88, and Phe133–Leu153. Heme b is bound by residues His38 and His52. Residues His137 and His151 each contribute to the heme b site. An a ubiquinone-binding site is contributed by His156. Residues Tyr181–His199 form a helical membrane-spanning segment.

It belongs to the cytochrome b family. The cytochrome bc1 complex contains 3 respiratory subunits (MT-CYB, CYC1 and UQCRFS1), 2 core proteins (UQCRC1 and UQCRC2) and probably 6 low-molecular weight proteins. It depends on heme b as a cofactor.

Its subcellular location is the mitochondrion inner membrane. Its function is as follows. Component of the ubiquinol-cytochrome c reductase complex (complex III or cytochrome b-c1 complex) that is part of the mitochondrial respiratory chain. The b-c1 complex mediates electron transfer from ubiquinol to cytochrome c. Contributes to the generation of a proton gradient across the mitochondrial membrane that is then used for ATP synthesis. This chain is Cytochrome b (mt-cyb), found in Sarda chiliensis (Pacific bonito).